The following is a 552-amino-acid chain: CTP synthase (552 aa).

The tract at residues 1-271 (MASAASSKHL…DAFVVRRLGL (271 aa)) is amidoligase domain. Ser18 lines the CTP pocket. Ser18 provides a ligand contact to UTP. ATP is bound by residues 19–24 (SLGKGL) and Asp76. Positions 76 and 145 each coordinate Mg(2+). Residues 152–154 (DIE), 192–197 (KTKPTQ), and Lys228 each bind CTP. Residues 192 to 197 (KTKPTQ) and Lys228 each bind UTP. In terms of domain architecture, Glutamine amidotransferase type-1 spans 296–546 (TIALVGKYVD…IEAALKYSAG (251 aa)). Gly359 provides a ligand contact to L-glutamine. Cys386 (nucleophile; for glutamine hydrolysis) is an active-site residue. L-glutamine contacts are provided by residues 387 to 390 (LGLQ), Glu410, and Arg472. Residues His519 and Glu521 contribute to the active site.

This sequence belongs to the CTP synthase family. Homotetramer.

The catalysed reaction is UTP + L-glutamine + ATP + H2O = CTP + L-glutamate + ADP + phosphate + 2 H(+). It carries out the reaction L-glutamine + H2O = L-glutamate + NH4(+). It catalyses the reaction UTP + NH4(+) + ATP = CTP + ADP + phosphate + 2 H(+). The protein operates within pyrimidine metabolism; CTP biosynthesis via de novo pathway; CTP from UDP: step 2/2. With respect to regulation, allosterically activated by GTP, when glutamine is the substrate; GTP has no effect on the reaction when ammonia is the substrate. The allosteric effector GTP functions by stabilizing the protein conformation that binds the tetrahedral intermediate(s) formed during glutamine hydrolysis. Inhibited by the product CTP, via allosteric rather than competitive inhibition. Functionally, catalyzes the ATP-dependent amination of UTP to CTP with either L-glutamine or ammonia as the source of nitrogen. Regulates intracellular CTP levels through interactions with the four ribonucleotide triphosphates. The polypeptide is CTP synthase (Thermobifida fusca (strain YX)).